The chain runs to 64 residues: Cytotoxin homolog S4C8 (64 aa).

Disulfide bonds link C3–C22, C15–C40, C44–C56, and C57–C62.

This sequence belongs to the three-finger toxin family. Short-chain subfamily. Orphan group XIII sub-subfamily. In terms of tissue distribution, expressed by the venom gland.

It localises to the secreted. The sequence is that of Cytotoxin homolog S4C8 from Aspidelaps scutatus (Shield-nose snake).